The chain runs to 512 residues: Putative ankyrin repeat protein FPV233 (512 aa).

ANK repeat units follow at residues 45 to 73, 77 to 106, 136 to 168, 172 to 201, 205 to 236, 238 to 262, 266 to 296, and 301 to 329; these read IPFI…NVNQ, DDTY…QCSV, IQDI…DINM, HGNS…NPNI, TNKS…NTDP, LSHA…SINA, YGNT…DVNA, and RNLT…DINS.

The chain is Putative ankyrin repeat protein FPV233 from Vertebrata (FPV).